Consider the following 388-residue polypeptide: Tumor protein p53-inducible protein 13 (388 aa).

The signal sequence occupies residues M1–A27. Over E28–E304 the chain is Extracellular. The chain crosses the membrane as a helical span at residues A305–C325. Residues T326 to D388 lie on the Cytoplasmic side of the membrane. A compositionally biased stretch (basic residues) spans P361–P372. The interval P361–D388 is disordered.

Its subcellular location is the cell membrane. It is found in the cytoplasm. In terms of biological role, may act as a tumor suppressor. Inhibits tumor cell growth, when overexpressed. In Rattus norvegicus (Rat), this protein is Tumor protein p53-inducible protein 13 (Tp53i13).